A 100-amino-acid polypeptide reads, in one-letter code: C-X-C motif chemokine 11 (100 aa).

Residues 1-21 form the signal peptide; it reads MNRKVTAIALAAIIWATAAQG. 2 cysteine pairs are disulfide-bonded: Cys-30–Cys-57 and Cys-32–Cys-74.

It belongs to the intercrine alpha (chemokine CxC) family. As to quaternary structure, interacts with TNFAIP6 (via Link domain).

It is found in the secreted. Its function is as follows. Chemotactic for interleukin-activated T-cells but not unstimulated T-cells, neutrophils or monocytes. Induces calcium release in activated T-cells. Binds to CXCR3. May play an important role in CNS diseases which involve T-cell recruitment. May play a role in skin immune responses. The protein is C-X-C motif chemokine 11 (Cxcl11) of Mus musculus (Mouse).